We begin with the raw amino-acid sequence, 1941 residues long: MSSDSELAVFGEAAPFLRKSERERIEAQNRPFDAKTSVFVAEPKESFVKGTIQSREGGKVTVKTEGGATLTVKDDQVFPMNPPKYDKIEDMAMMTHLHEPAVLYNLKERYAAWMIYTYSGLFCVTVNPYKWLPVYKPEVVTAYRGKKRQEAPPHIFSISDNAYQFMLTDRENQSILITGESGAGKTVNTKRVIQYFATIAVTGEKKKEEITSGKIQGTLEDQIISANPLLEAFGNAKTVRNDNSSRFGKFIRIHFGTTGKLASADIETYLLEKSRVVFQLKAERSYHIFYQITSNKKPELIEMLLITTNPYDYPFVSQGEISVASIDDQEELMATDSAIDILGFTNEEKVSIYKLTGAVMHYGNLKFKQKQREEQAEPDGTEVADKAAYLQSLNSADLLKALCYPRVKVGNEYVTKGQTVEQVSNAVGALAKAVYEKMFLWMVARINQQLDTKQPRQYFIGVLDIAGFEIFDFNSLEQLCINFTNEKLQQFFNHHMFVLEQEEYKKEGIEWTFIDFGMDLAACIELIEKPMGIFSILEEECMFPKATDTSFKNKLYDQHLGKSANFQKPKVVKGKAEAHFALIHYAGVVDYNITGWLEKNKDPLNETVVGLYQKSAMKTLAQLFSGAQTAEGEGAGGGAKKGGKKKGSSFQTVSALFRENLNKLMTNLRSTHPHFVRCIIPNETKTPGAMEHELVLHQLRCNGVLEGIRICRKGFPSRILYADFKQRYKVLNASAIPEGQFIDSKKASEKLLASIDIDHTQYKFGHTKVFFKAGLLGLLEEMRDDKLAQLITRTQARCRGFLARVEYQRMVERREAIFCIQYNIRSFMNVKHWPWMKLFFKIKPLLKSAETEKEMATMKEEFQKIKDELAKSEAKRKELEEKMVTLLKEKNDLQLQVQAEAEGLADAEERCDQLIKTKIQLEAKIKEVTERAEDEEEINAELTAKKRKLEDECSELKKDIDDLELTLAKVEKEKHATENKVKNLTEEMAGLDETIAKLTKEKKALQEAHQQTLDDLQAEEDKVNTLTKAKIKLEQQVDDLEGSLEQEKKLRMDLERAKRKLEGDLKLAQESIMDIENEKQQLDEKLKKKEFEISNLQSKIEDEQALGIQLQKKIKELQARIEELEEEIEAERASRAKAEKQRSDLSRELEEISERLEEAGGATSAQIEMNKKREAEFQKMRRDLEEATLQHEATAATLRKKHADSVAELGEQIDNLQRVKQKLEKEKSEMKMEIDDLASNVETVSKAKGNLEKMCRTLEDQLSELKSKEEEQQRLINDLTAQRGRLQTESGEFSRQLDEKEALVSQLSRGKQAFTQQIEELKRQLEEEIKAKNALAHALQSSRHDCDLLREQYEEEQESKAELQRALSKANTEVAQWRTKYETDAIQRTEELEEAKKKLAQRLQAAEEHVEAVNAKCASLEKTKQRLQNEVEDLMLDVERTNAACAALDKKQRNFDKILAEWKQKCEETHAELEASQKEARSLGTELFKIKNAYEESLDQLETLKRENKNLQQEISDLTEQIAEGGKRIHELEKIKKQVEQEKCELQAALEEAEASLEHEEGKILRIQLELNQVKSEVDRKIAEKDEEIDQLKRNHIRIVESMQSTLDAEIRSRNDAIRLKKKMEGDLNEMEIQLNHANRMAAEALRNYRNTQGILKDTQIHLDDALRSQEDLKEQLAMVERRANLLQAEIEELRATLEQTERSRKIAEQELLDASERVQLLHTQNTSLINTKKKLETDISQMQGEMEDILQEARNAEEKAKKAITDAAMMAEELKKEQDTSAHLERMKKNMEQTVKDLQLRLDEAEQLALKGGKKQIQKLEARVRELEGEVESEQKRNAEAVKGLRKHERRVKELTYQTEEDRKNILRLQDLVDKLQAKVKSYKRQAEEAEEQSNTNLAKFRKLQHELEEAEERADIAESQVNKLRVKSREVHTKVISEE.

Residues 33 to 82 enclose the Myosin N-terminal SH3-like domain; sequence DAKTSVFVAEPKESFVKGTIQSREGGKVTVKTEGGATLTVKDDQVFPMNP. Thr64 and Thr69 each carry phosphothreonine. In terms of domain architecture, Myosin motor spans 86–784; sequence DKIEDMAMMT…LLGLLEEMRD (699 aa). Lys130 is modified (N6,N6,N6-trimethyllysine). 179–186 provides a ligand contact to ATP; sequence GESGAGKT. Tyr389 bears the Phosphotyrosine mark. Ser392 is modified (phosphoserine). Thr419 is modified (phosphothreonine). Residue Ser625 is modified to Phosphoserine. Residues 661-683 are actin-binding; the sequence is LNKLMTNLRSTHPHFVRCIIPNE. The residue at position 759 (His759) is a Pros-methylhistidine. The actin-binding stretch occupies residues 763–777; that stretch reads KFGHTKVFFKAGLLG. The 30-residue stretch at 787 to 816 folds into the IQ domain; sequence LAQLITRTQARCRGFLARVEYQRMVERREA. Residues 845–1941 are a coiled coil; that stretch reads LLKSAETEKE…EVHTKVISEE (1097 aa). Phosphoserine occurs at positions 1094 and 1098. Disordered stretches follow at residues 1128–1149 and 1155–1174; these read IEAE…SREL and RLEE…KKRE. Positions 1130–1149 are enriched in basic and acidic residues; it reads AERASRAKAEKQRSDLSREL. Residues Ser1164 and Ser1239 each carry the phosphoserine modification. Thr1243 is modified (phosphothreonine). The residue at position 1245 (Ser1245) is a Phosphoserine. Thr1257 is modified (phosphothreonine). Ser1263 carries the phosphoserine modification. The residue at position 1288 (Thr1288) is a Phosphothreonine. 4 positions are modified to phosphoserine: Ser1290, Ser1294, Ser1305, and Ser1308. Residue Thr1469 is modified to Phosphothreonine. Ser1476 bears the Phosphoserine mark. Tyr1494 carries the phosphotyrosine modification. The residue at position 1497 (Ser1497) is a Phosphoserine. Thr1503 bears the Phosphothreonine mark. Position 1516 is a phosphoserine (Ser1516). Thr1519 is subject to Phosphothreonine. 6 positions are modified to phosphoserine: Ser1556, Ser1576, Ser1602, Ser1605, Ser1716, and Ser1728. Phosphothreonine occurs at positions 1732 and 1738. Phosphoserine is present on Ser1741.

This sequence belongs to the TRAFAC class myosin-kinesin ATPase superfamily. Myosin family. Muscle myosin is a hexameric protein that consists of 2 heavy chain subunits (MHC), 2 alkali light chain subunits (MLC) and 2 regulatory light chain subunits (MLC-2). Interacts with GCSAM.

The protein resides in the cytoplasm. The protein localises to the myofibril. Myosins are actin-based motor molecules with ATPase activity essential for muscle contraction. The sequence is that of Myosin-2 from Homo sapiens (Human).